The sequence spans 356 residues: RuBisCO accumulation factor 1 (356 aa).

Positions 7–185 (ALTTEVLQRL…RQALEKLLTD (179 aa)) are N-terminal alpha-helix. The segment at 209–342 (PYLVPVAGTA…LLLVLRPPQV (134 aa)) is C-terminal beta-sheet.

Belongs to the RAF family. In terms of assembly, homodimer. Forms an RbcL(8)-Raf1(8) complex. Forms complexes of many stoichiometries with RbcL with and without RbcS. RbcX and Raf1 can bind simultaneously to RbcL.

It localises to the cytoplasm. In terms of biological role, a major RuBisCO chaperone. Acts after GroEL-GroES chaperonin to fold and/or assemble the large subunit of RuBisCO (ccbL, rbcL). Cooperates with RbcX in RbcL folding, plays the major role in assembly of dimers into RbcL(8)-Raf1(8) intermediate complexes. RbcS replaces Raf1, leading to holoenzyme formation. Its function is as follows. Required for optimal reconstitution of RuBisCO upon expression of rbcL-rbcS subunits in E.coli. Only interacts with the large subunit (cbbL, rbcL). Probably acts in the final stages of RuBisCO assembly, possibly participating in the addition of the small subunit (ccbS, rbcS). The sequence is that of RuBisCO accumulation factor 1 from Thermosynechococcus vestitus (strain NIES-2133 / IAM M-273 / BP-1).